The chain runs to 183 residues: MLLEETLKSCPIVKRGEYHYFIHPISDGVPVVEPKLLREVATRIIKIGDFEGATKLVTAEAMGIPLVTTLSLYTDIPYVIMRKREYKLPGEIPVFQSTGYSKGQLYLNGIEKGDKVVIIDDVISTGGTMIAIIDALKRAGAEIKDIICVIERGEGKKIVEEKTGYKIKTLVKIDVVDGKVVIL.

This sequence belongs to the purine/pyrimidine phosphoribosyltransferase family. Archaeal HPRT subfamily. As to quaternary structure, homodimer.

It is found in the cytoplasm. It carries out the reaction IMP + diphosphate = hypoxanthine + 5-phospho-alpha-D-ribose 1-diphosphate. The enzyme catalyses GMP + diphosphate = guanine + 5-phospho-alpha-D-ribose 1-diphosphate. The protein operates within purine metabolism; IMP biosynthesis via salvage pathway; IMP from hypoxanthine: step 1/1. Catalyzes a salvage reaction resulting in the formation of IMP that is energically less costly than de novo synthesis. This Methanocaldococcus jannaschii (strain ATCC 43067 / DSM 2661 / JAL-1 / JCM 10045 / NBRC 100440) (Methanococcus jannaschii) protein is Hypoxanthine/guanine phosphoribosyltransferase.